A 371-amino-acid chain; its full sequence is Uroporphyrinogen decarboxylase (371 aa).

Positions 1 to 14 (MARWATMSTETTGT) are enriched in polar residues. The disordered stretch occupies residues 1 to 30 (MARWATMSTETTGTGARDEGPRPGDPADSP). Residues 49–53 (RQAGR), Asp-98, Tyr-173, Ser-228, and His-342 each bind substrate.

Belongs to the uroporphyrinogen decarboxylase family. Homodimer.

It localises to the cytoplasm. The catalysed reaction is uroporphyrinogen III + 4 H(+) = coproporphyrinogen III + 4 CO2. Its pathway is porphyrin-containing compound metabolism; protoporphyrin-IX biosynthesis; coproporphyrinogen-III from 5-aminolevulinate: step 4/4. Functionally, catalyzes the decarboxylation of four acetate groups of uroporphyrinogen-III to yield coproporphyrinogen-III. The chain is Uroporphyrinogen decarboxylase from Salinispora tropica (strain ATCC BAA-916 / DSM 44818 / JCM 13857 / NBRC 105044 / CNB-440).